The primary structure comprises 383 residues: MDLCQKNETDLENGENNEIQSTEETEPTCTCPDGRSEKNHVCCLLDISDITLEQDVKAEEFIIGTGWEEAVQGWGRTSPAACIWPRKLPKKARVGEGACSDCLVCLNLAHRSLETKPPTEGGPEKDQSSPSQTQAAPQGPSTASRAISNICFPTYFRTEKKSLQIKEFIWCTEDWAISDSSRGKALRNPSGGAHRGLSIPGPLTSRALLVLPPLKASLSNALDVLGKKSKNSFLQSEEKVLSVEKDGCLACAYGLKTADGKGEKRPSELAKHTVVNDTPSSPSPAARTSLLTDPEQCCLHWSLLSEKNLACPSDSSNVRYLAALQLLQKRGVQNYKSKFQAKDPRPPVITQKAKQENSPQMLETKVFTRPLLPSLTHRKKKIK.

Disordered regions lie at residues 1–30, 114–144, 262–289, and 341–360; these read MDLC…PTCT, ETKP…STAS, GEKR…ARTS, and AKDP…NSPQ. Over residues 10 to 26 the composition is skewed to acidic residues; sequence DLENGENNEIQSTEETE. Low complexity predominate over residues 128–141; sequence SSPSQTQAAPQGPS. The segment covering 262 to 271 has biased composition (basic and acidic residues); the sequence is GEKRPSELAK.

This is an uncharacterized protein from Macaca fascicularis (Crab-eating macaque).